A 534-amino-acid chain; its full sequence is Peptide chain release factor 3 (534 aa).

The tr-type G domain occupies 9 to 278 (SRRRTFAIIS…FFVEHAPPPQ (270 aa)). Residues 18 to 25 (SHPDAGKT), 86 to 90 (DTPGH), and 140 to 143 (NKLD) each bind GTP.

It belongs to the TRAFAC class translation factor GTPase superfamily. Classic translation factor GTPase family. PrfC subfamily.

The protein resides in the cytoplasm. Increases the formation of ribosomal termination complexes and stimulates activities of RF-1 and RF-2. It binds guanine nucleotides and has strong preference for UGA stop codons. It may interact directly with the ribosome. The stimulation of RF-1 and RF-2 is significantly reduced by GTP and GDP, but not by GMP. The sequence is that of Peptide chain release factor 3 from Stenotrophomonas maltophilia (strain R551-3).